The chain runs to 538 residues: Bifunctional purine biosynthesis protein PurH (538 aa).

The MGS-like domain occupies 8–158 (IPAPDKVEIK…KNHAYVTILT (151 aa)).

This sequence belongs to the PurH family.

The enzyme catalyses (6R)-10-formyltetrahydrofolate + 5-amino-1-(5-phospho-beta-D-ribosyl)imidazole-4-carboxamide = 5-formamido-1-(5-phospho-D-ribosyl)imidazole-4-carboxamide + (6S)-5,6,7,8-tetrahydrofolate. It catalyses the reaction IMP + H2O = 5-formamido-1-(5-phospho-D-ribosyl)imidazole-4-carboxamide. The protein operates within purine metabolism; IMP biosynthesis via de novo pathway; 5-formamido-1-(5-phospho-D-ribosyl)imidazole-4-carboxamide from 5-amino-1-(5-phospho-D-ribosyl)imidazole-4-carboxamide (10-formyl THF route): step 1/1. It participates in purine metabolism; IMP biosynthesis via de novo pathway; IMP from 5-formamido-1-(5-phospho-D-ribosyl)imidazole-4-carboxamide: step 1/1. This chain is Bifunctional purine biosynthesis protein PurH, found in Rhizobium etli (strain ATCC 51251 / DSM 11541 / JCM 21823 / NBRC 15573 / CFN 42).